The chain runs to 675 residues: DNA ligase (675 aa).

NAD(+)-binding positions include D36–D40, S85–L86, and E117. The active-site N6-AMP-lysine intermediate is K119. Residues R140, E177, K294, and K318 each contribute to the NAD(+) site. C412, C415, C430, and C436 together coordinate Zn(2+). In terms of domain architecture, BRCT spans A597 to E675.

This sequence belongs to the NAD-dependent DNA ligase family. LigA subfamily. Mg(2+) serves as cofactor. It depends on Mn(2+) as a cofactor.

The enzyme catalyses NAD(+) + (deoxyribonucleotide)n-3'-hydroxyl + 5'-phospho-(deoxyribonucleotide)m = (deoxyribonucleotide)n+m + AMP + beta-nicotinamide D-nucleotide.. Functionally, DNA ligase that catalyzes the formation of phosphodiester linkages between 5'-phosphoryl and 3'-hydroxyl groups in double-stranded DNA using NAD as a coenzyme and as the energy source for the reaction. It is essential for DNA replication and repair of damaged DNA. This chain is DNA ligase, found in Thioalkalivibrio sulfidiphilus (strain HL-EbGR7).